A 356-amino-acid chain; its full sequence is MKREQLIQNIEKLKHVMPPYVLEYYQSKLTIPYSLNTLYEYLKEYERFFSWLVDSGVADVDKITDVSLSVLENLTKRDLESFILYLRERPRLNTHSTRYGVSQTTINRTLSALSSLYKYLTEEVENEDGEPYFYRNVMKKVQTKKKSETLASRAENIKGKLFLGDETQGFLDYIDSEYEKTLSNRARSSFFKNKERDLAIIALILASGIRLSEAVNVDLRDLNLNTMIVEVTRKGGKRDAVPFAPFAKTYFERYLEVRSQRYKTTAKDTAFFVTLYRDIASRIDPSSVEKLVAKYSQAFKVRVTPHKLRHTLATRLYAQTNSQVLVSNQLGHASTQVTDLYTHIINEEQKNALDSL.

A Core-binding (CB) domain is found at 16–121 (VMPPYVLEYY…ALSSLYKYLT (106 aa)). Residues 169-354 (GFLDYIDSEY…INEEQKNALD (186 aa)) enclose the Tyr recombinase domain. Catalysis depends on residues Arg-210, Lys-234, His-306, Arg-309, and His-332. Tyr-341 (O-(3'-phospho-DNA)-tyrosine intermediate) is an active-site residue.

It belongs to the 'phage' integrase family. XerS subfamily.

The protein resides in the cytoplasm. With respect to regulation, ftsK is required for recombination. In terms of biological role, site-specific tyrosine recombinase, which acts by catalyzing the cutting and rejoining of the recombining DNA molecules. Essential to convert dimers of the bacterial chromosome into monomers to permit their segregation at cell division. Binds an atypical recombination dif site (difSL). Binds preferentially to the left arm and cooperatively to the right arm of difSL. This chain is Tyrosine recombinase XerS, found in Lactococcus lactis subsp. cremoris (strain MG1363).